Consider the following 361-residue polypeptide: Peptide chain release factor 1 (361 aa).

Glutamine 237 is modified (N5-methylglutamine). Over residues 287 to 297 (KQQKEQSDTRK) the composition is skewed to basic and acidic residues. Positions 287 to 313 (KQQKEQSDTRKSLVGSGDRSERIRTYN) are disordered.

Belongs to the prokaryotic/mitochondrial release factor family. Methylated by PrmC. Methylation increases the termination efficiency of RF1.

The protein localises to the cytoplasm. Functionally, peptide chain release factor 1 directs the termination of translation in response to the peptide chain termination codons UAG and UAA. The protein is Peptide chain release factor 1 of Francisella tularensis subsp. novicida (strain U112).